A 2542-amino-acid polypeptide reads, in one-letter code: Highly reducing polyketide synthase (2542 aa).

Residues 7-435 form the Ketosynthase family 3 (KS3) domain; sequence PEPIAIVGMA…GANAHAILDA (429 aa). Active-site for beta-ketoacyl synthase activity residues include cysteine 182, histidine 317, and histidine 357. The Malonyl-CoA:ACP transacylase (MAT) domain maps to 545 to 872; it reads FVFTGQGAQW…NLVGSLFLSG (328 aa). The tract at residues 927-1062 is N-terminal hotdog fold; the sequence is HDLLGSRIPG…TTNETLRINS (136 aa). The 298-residue stretch at 927-1224 folds into the PKS/mFAS DH domain; sequence HDLLGSRIPG…FLSLETATKE (298 aa). Histidine 959 serves as the catalytic Proton acceptor; for dehydratase activity. The tract at residues 1072 to 1224 is C-terminal hotdog fold; the sequence is NKDSYVRRWY…FLSLETATKE (153 aa). Residue aspartate 1137 is the Proton donor; for dehydratase activity of the active site. The tract at residues 1275–1574 is methyltransferase (CMet) domain; sequence LTQLAIRSVV…AGADIMLDDY (300 aa). Positions 1606 to 1634 are disordered; that stretch reads VNGTNGINSTNSVNVTNDTSGINDTNRMN. Positions 1866 to 2186 constitute an Enoyl reductase (ER) domain; sequence GKANSFYFES…QGDSVGSVVL (321 aa). Positions 2209–2389 constitute a Ketoreductase (KR) domain; the sequence is ASYLLVGCLG…QAMSMALGMI (181 aa).

Requires pantetheine 4'-phosphate as cofactor.

Its pathway is antifungal biosynthesis. In terms of biological role, highly reducing polyketide synthase; part of the gene cluster that mediates the biosynthesis of the tetrahydropyranyl antifungal agent lanomycin that acts as an inhibitor of CYP51 and blocks the ergosterol biosynthesis. The biosynthesis probably begins with the formation of an hexaketide, followed by methionine mediated alkylation of C-2 and C-6, and methylation of the reduced C-3 oxygen, pyran forming reductive ring closure, oxygenation of C-4, beta-keto reduction, enoyl reduction and dehydration of the remaining oxygens, and finally, acylation with glycine to complete the biosynthesis. This chain is Highly reducing polyketide synthase, found in Pyrenophora dematioidea (Helminthosporium dematioideum).